The following is a 325-amino-acid chain: MAASCVLLHTGQKMPLIGLGTWKSEPGQVKAAVKYALSVGYRHIDCAAIYGNEPEIGEALKEDVGPGKAVPREELFVTSKLWNTKHHPEDVEPALRKTLADLQLEYLDLYLMHWPYAFERGDNPFPKNADGTICYDSTHYKETWKALEALVAKGLVQALGLSNFNSRQIDDILSVASVRPAVLQVECHPYLAQNELIAHCQARGLEVTAYSPLGSSDRAWRDPDEPVLLEEPVVLALAEKYGRSPAQILLRWQVQRKVICIPKSITPSRILQNIKVFDFTFSPEEMKQLNALNKNWRYIVPMLTVDGKRVPRDAGHPLYPFNDPY.

Ala2 is subject to N-acetylalanine. At Ser4 the chain carries Phosphoserine. NADP(+) contacts are provided by residues 11–20 (GQKMPLIGLG), Thr21, and Trp22. Ser38 carries the phosphoserine modification. NADP(+) is bound at residue Asp45. Catalysis depends on Tyr50, which acts as the Proton donor. Lys127 carries the post-translational modification N6-acetyllysine; alternate. Lys127 bears the N6-succinyllysine; alternate mark. An N6-succinyllysine modification is found at Lys145. Residues Ser162, Asn163, Ser211, Leu213, Ser215, Ser216, Lys263, Ser264, Ile265, Thr266, Arg269, Gln272, and Asn273 each coordinate NADP(+). Ser211 carries the post-translational modification Phosphoserine.

Belongs to the aldo/keto reductase family. Monomer. Widely expressed. Highly expressed in kidney, salivary gland and liver. Detected in trachea, stomach, brain, lung, prostate, placenta, mammary gland, small intestine and lung.

The protein localises to the cytoplasm. It is found in the cytosol. The protein resides in the apical cell membrane. The catalysed reaction is a primary alcohol + NADP(+) = an aldehyde + NADPH + H(+). It carries out the reaction allyl alcohol + NADP(+) = acrolein + NADPH + H(+). The enzyme catalyses glycerol + NADP(+) = D-glyceraldehyde + NADPH + H(+). It catalyses the reaction glycerol + NADP(+) = L-glyceraldehyde + NADPH + H(+). The catalysed reaction is hydroxyacetone + NADP(+) = methylglyoxal + NADPH + H(+). It carries out the reaction a 4-hydroxynonen-1-ol + NADP(+) = a 4-hydroxynonenal + NADPH + H(+). The enzyme catalyses 3-deoxyfructose + NADP(+) = 3-deoxyglucosone + NADPH + H(+). It catalyses the reaction L-gulonate + NADP(+) = aldehydo-D-glucuronate + NADPH + H(+). The catalysed reaction is L-gulono-1,4-lactone + NADP(+) = D-glucurono-3,6-lactone + NADPH + H(+). It carries out the reaction pyridine 3-methanol + NADP(+) = pyridine-3-carbaldehyde + NADPH + H(+). The enzyme catalyses S-nitroso-CoA + NADPH + H(+) = sulfinamide-CoA + NADP(+). It catalyses the reaction S-nitrosoglutathione + NADPH + H(+) = S-(hydroxysulfenamide)glutathione + NADP(+). Catalyzes the NADPH-dependent reduction of a wide variety of carbonyl-containing compounds to their corresponding alcohols. Displays enzymatic activity towards endogenous metabolites such as aromatic and aliphatic aldehydes, ketones, monosaccharides and bile acids, with a preference for negatively charged substrates, such as glucuronate and succinic semialdehyde. Functions as a detoxifiying enzyme by reducing a range of toxic aldehydes. Reduces methylglyoxal and 3-deoxyglucosone, which are present at elevated levels under hyperglycemic conditions and are cytotoxic. Involved also in the detoxification of lipid-derived aldehydes like acrolein. Plays a role in the activation of procarcinogens, such as polycyclic aromatic hydrocarbon trans-dihydrodiols, and in the metabolism of various xenobiotics and drugs, including the anthracyclines doxorubicin (DOX) and daunorubicin (DAUN). Also acts as an inhibitor of protein S-nitrosylation by mediating degradation of S-nitroso-coenzyme A (S-nitroso-CoA), a cofactor required to S-nitrosylate proteins. S-nitroso-CoA reductase activity is involved in reprogramming intermediary metabolism in renal proximal tubules, notably by inhibiting protein S-nitrosylation of isoform 2 of PKM (PKM2). Also acts as a S-nitroso-glutathione reductase by catalyzing the NADPH-dependent reduction of S-nitrosoglutathione. Displays no reductase activity towards retinoids. The chain is Aldo-keto reductase family 1 member A1 (AKR1A1) from Homo sapiens (Human).